The following is a 267-amino-acid chain: Enolase-phosphatase E1 (267 aa).

2 residues coordinate Mg(2+): aspartate 11 and glutamate 13. Substrate-binding positions include 155–156 (SS) and lysine 189. Aspartate 215 lines the Mg(2+) pocket.

It belongs to the HAD-like hydrolase superfamily. MasA/MtnC family. Monomer. Requires Mg(2+) as cofactor.

It localises to the cytoplasm. The protein resides in the nucleus. It catalyses the reaction 5-methylsulfanyl-2,3-dioxopentyl phosphate + H2O = 1,2-dihydroxy-5-(methylsulfanyl)pent-1-en-3-one + phosphate. It participates in amino-acid biosynthesis; L-methionine biosynthesis via salvage pathway; L-methionine from S-methyl-5-thio-alpha-D-ribose 1-phosphate: step 3/6. It functions in the pathway amino-acid biosynthesis; L-methionine biosynthesis via salvage pathway; L-methionine from S-methyl-5-thio-alpha-D-ribose 1-phosphate: step 4/6. Bifunctional enzyme that catalyzes the enolization of 2,3-diketo-5-methylthiopentyl-1-phosphate (DK-MTP-1-P) into the intermediate 2-hydroxy-3-keto-5-methylthiopentenyl-1-phosphate (HK-MTPenyl-1-P), which is then dephosphorylated to form the acireductone 1,2-dihydroxy-3-keto-5-methylthiopentene (DHK-MTPene). The sequence is that of Enolase-phosphatase E1 (enoph1) from Dictyostelium discoideum (Social amoeba).